The sequence spans 66 residues: Gallinacin-5 (66 aa).

A signal peptide spans 1-19; that stretch reads MQILTLLFAVLLLMLRAEP. Positions 20–25 are excised as a propeptide; sequence GLSLAR. Cystine bridges form between cysteine 31-cysteine 59, cysteine 38-cysteine 53, and cysteine 43-cysteine 60.

This sequence belongs to the beta-defensin family. As to expression, strong expression in the tongue and bone marrow. Low expression in the esophagus, trachea, lung, brain and ovary. Expressed in the ovarian stroma, but not in the ovarian follicles.

Its subcellular location is the secreted. It localises to the cytoplasmic granule. Its function is as follows. Has bactericidal activity. This is Gallinacin-5 (GAL5) from Gallus gallus (Chicken).